We begin with the raw amino-acid sequence, 152 residues long: Small ribosomal subunit protein uS8m (152 aa).

Belongs to the universal ribosomal protein uS8 family.

The protein resides in the mitochondrion. This Dictyostelium citrinum (Slime mold) protein is Small ribosomal subunit protein uS8m (mrps8).